A 1048-amino-acid polypeptide reads, in one-letter code: Pleckstrin homology domain-containing family A member 6 (1048 aa).

The segment covering Met1–Met22 has biased composition (polar residues). The tract at residues Met1–Thr36 is disordered. Positions Pro59 to Arg158 constitute a PH domain. Disordered stretches follow at residues Gln165–Leu318 and Ser448–Arg467. Residues Pro201 to Pro233 are compositionally biased toward basic and acidic residues. Residues Ser247 and Ser251 each carry the phosphoserine modification. Over residues Ala267 to Gly290 the composition is skewed to polar residues. Phosphoserine is present on residues Ser314, Ser459, Ser461, and Ser472. Polar residues predominate over residues Val456–Tyr465. Tyr492 carries the phosphotyrosine modification. Ser591 carries the post-translational modification Phosphoserine. The tract at residues Arg663–Arg746 is disordered. A compositionally biased stretch (low complexity) spans Ser687–Ser711. Polar residues predominate over residues Gly712–Gly721. A Phosphothreonine modification is found at Thr744. Position 777 is a phosphoserine (Ser777). Thr784 is modified (phosphothreonine). Residues Ala793–Ala858 form a disordered region. The segment covering Ser794–Gln803 has biased composition (polar residues). At Ser801 the chain carries Phosphoserine. Residues Gly815–Arg827 show a composition bias toward basic and acidic residues. The segment covering Met828 to Ser842 has biased composition (basic residues). Phosphoserine occurs at positions 848, 854, and 867. A Phosphothreonine modification is found at Thr920. Phosphoserine is present on Ser940. 2 disordered regions span residues Pro968–Glu989 and Arg1005–Val1048. Phosphothreonine is present on Thr1015. Positions Pro1016–Asn1030 are enriched in pro residues. The residue at position 1017 (Ser1017) is a Phosphoserine. The residue at position 1020 (Thr1020) is a Phosphothreonine. 2 positions are modified to phosphoserine: Ser1021 and Ser1024.

As to expression, highly expressed in heart, kidney and throughout the brain.

The protein is Pleckstrin homology domain-containing family A member 6 (PLEKHA6) of Homo sapiens (Human).